Here is a 273-residue protein sequence, read N- to C-terminus: Large ribosomal subunit protein uL2 (273 aa).

The disordered stretch occupies residues 221–273; that stretch reads RGTAMNPVDHPHGGGEGRNFGKHPVSPWGVQTKGKKTRHNKRTDKYIVRRRGK. Residues 253–273 show a composition bias toward basic residues; it reads KGKKTRHNKRTDKYIVRRRGK.

It belongs to the universal ribosomal protein uL2 family. Part of the 50S ribosomal subunit. Forms a bridge to the 30S subunit in the 70S ribosome.

Its function is as follows. One of the primary rRNA binding proteins. Required for association of the 30S and 50S subunits to form the 70S ribosome, for tRNA binding and peptide bond formation. It has been suggested to have peptidyltransferase activity; this is somewhat controversial. Makes several contacts with the 16S rRNA in the 70S ribosome. The protein is Large ribosomal subunit protein uL2 of Mannheimia succiniciproducens (strain KCTC 0769BP / MBEL55E).